A 419-amino-acid polypeptide reads, in one-letter code: L-rhamnose isomerase (419 aa).

Mn(2+)-binding residues include H262, D294, and D296.

It belongs to the rhamnose isomerase family. Homotetramer. Mn(2+) serves as cofactor.

Its subcellular location is the cytoplasm. It carries out the reaction L-rhamnopyranose = L-rhamnulose. Its pathway is carbohydrate degradation; L-rhamnose degradation; glycerone phosphate from L-rhamnose: step 1/3. In terms of biological role, catalyzes the interconversion of L-rhamnose and L-rhamnulose. This is L-rhamnose isomerase from Escherichia coli (strain 55989 / EAEC).